Here is a 262-residue protein sequence, read N- to C-terminus: MNSSFSAPAKKSLGQHFLADRYYIDRIVQAVDPRPGQHLVEIGPGQGAITFPLLRKHGALTVIEFDRDLIAPLTDAAAPIGQLQIIHRDVLAVDFTAVADGTPIRLVGNLPYNISSPILFHALDHAGAVADMHFMLQKEVVDRMAAGPGSKVYGRLSVMLQAYCEVTALFVVPPGAFRPPPKVDSAVVRLVPRDAASVLIKDRKRFADVVRAGFGQRRKTLRNALSTVCEPAHFEAAGVRPDARAEQLEVADFIRLANVELA.

Residues H16, L18, G43, E64, D89, and N109 each contribute to the S-adenosyl-L-methionine site.

It belongs to the class I-like SAM-binding methyltransferase superfamily. rRNA adenine N(6)-methyltransferase family. RsmA subfamily.

Its subcellular location is the cytoplasm. It catalyses the reaction adenosine(1518)/adenosine(1519) in 16S rRNA + 4 S-adenosyl-L-methionine = N(6)-dimethyladenosine(1518)/N(6)-dimethyladenosine(1519) in 16S rRNA + 4 S-adenosyl-L-homocysteine + 4 H(+). Its function is as follows. Specifically dimethylates two adjacent adenosines (A1518 and A1519) in the loop of a conserved hairpin near the 3'-end of 16S rRNA in the 30S particle. May play a critical role in biogenesis of 30S subunits. This chain is Ribosomal RNA small subunit methyltransferase A, found in Xanthomonas campestris pv. campestris (strain 8004).